We begin with the raw amino-acid sequence, 477 residues long: MSVLALGLSHRSAPVTLLERVALSGEVRLKLMTEMVNTSAVNEAMVVSTCNRTEVYADVDQFHPGVAAICELLSQYTGVSQEELTQHCYVHYEERAVQHLFSVACGLDSMVVGEGQILGQVRNALKDAQHVGTLGRVLNDLGQRALRVGKRAHTETHLDKAGASMVSFGLTVAGRFLTPDREPQPSAAAAVCPVDGDTGVEVSAALPDPQLLTGRRIMVLGAGSMSALAANTVARHGASTILIANRTFDRAQRLAECLTEGYESVRSSAVPFEDAARHLADIDLVISCTGAQGIVLTAEQVAAGGDRATRPLVFLDLALPHDIDKAVRKLPGVHLVDIEELRDAAEDGTATGQVADLTAVRDIVAEEVAEYQAVRSAERVAPTVVALRSKAQKVVESELERLNGRLPGIDDRTRAEITRTVRRVVDKLLHQPTVRVKQLATGPEGAVYAEALRELFDLDPAIPSAVVKPGTALGEER.

Substrate-binding positions include 49–52, serine 109, 114–116, and glutamine 120; these read TCNR and EGQ. The active-site Nucleophile is the cysteine 50. An NADP(+)-binding site is contributed by 221 to 226; sequence GAGSMS.

The protein belongs to the glutamyl-tRNA reductase family. Homodimer.

The enzyme catalyses (S)-4-amino-5-oxopentanoate + tRNA(Glu) + NADP(+) = L-glutamyl-tRNA(Glu) + NADPH + H(+). It functions in the pathway porphyrin-containing compound metabolism; protoporphyrin-IX biosynthesis; 5-aminolevulinate from L-glutamyl-tRNA(Glu): step 1/2. Its function is as follows. Catalyzes the NADPH-dependent reduction of glutamyl-tRNA(Glu) to glutamate 1-semialdehyde (GSA). This is Glutamyl-tRNA reductase from Thermobifida fusca (strain YX).